The sequence spans 87 residues: Diazepam-binding inhibitor-like 5 (87 aa).

The region spanning 2–87 (SQVEFEMACA…VEELKKNETC (86 aa)) is the ACB domain. An acyl-CoA contacts are provided by residues 29-33 (YSFYK), K55, and Y74.

The protein belongs to the ACBP family. Testis.

The protein localises to the cytoplasm. In terms of biological role, may be involved in the energy metabolism of the mature sperm. The chain is Diazepam-binding inhibitor-like 5 (Dbil5) from Rattus norvegicus (Rat).